The sequence spans 180 residues: Adenine phosphoribosyltransferase (180 aa).

Belongs to the purine/pyrimidine phosphoribosyltransferase family. In terms of assembly, homodimer.

The protein resides in the cytoplasm. The enzyme catalyses AMP + diphosphate = 5-phospho-alpha-D-ribose 1-diphosphate + adenine. The protein operates within purine metabolism; AMP biosynthesis via salvage pathway; AMP from adenine: step 1/1. Its function is as follows. Catalyzes a salvage reaction resulting in the formation of AMP, that is energically less costly than de novo synthesis. The polypeptide is Adenine phosphoribosyltransferase (Haemophilus influenzae (strain 86-028NP)).